The primary structure comprises 427 residues: Probable purple acid phosphatase 20 (427 aa).

An N-terminal signal peptide occupies residues 1–21 (MVKVLGLVAILLIVLAGNVLS). An N-linked (GlcNAc...) asparagine glycan is attached at Asn-85. Fe cation contacts are provided by Asp-147, Asp-174, and Tyr-177. Asp-174 lines the Zn(2+) pocket. Positions 207 and 291 each coordinate Zn(2+). Asn-207 contacts substrate. His-301 functions as the Proton donor in the catalytic mechanism. His-330 contacts Zn(2+). Residue 330 to 332 (HVH) coordinates substrate. Position 332 (His-332) interacts with Fe cation. Asn-392 carries N-linked (GlcNAc...) asparagine glycosylation.

Belongs to the metallophosphoesterase superfamily. Purple acid phosphatase family. As to quaternary structure, homodimer. It depends on Fe cation as a cofactor. The cofactor is Zn(2+). As to expression, expressed flowers and siliques.

It is found in the secreted. It catalyses the reaction a phosphate monoester + H2O = an alcohol + phosphate. This chain is Probable purple acid phosphatase 20 (PAP20), found in Arabidopsis thaliana (Mouse-ear cress).